Consider the following 359-residue polypeptide: Hereditary hemochromatosis protein homolog (359 aa).

Positions 1–24 are cleaved as a signal peptide; the sequence is MSLSAGLPVRPLLLLLLLLWSVAP. Positions 25–126 are alpha-1; the sequence is QALPPRSHSL…KVTKLGVVSE (102 aa). Residues 25 to 318 are Extracellular-facing; sequence QALPPRSHSL…WEPLQSQAMI (294 aa). Asparagine 114, asparagine 142, asparagine 166, and asparagine 246 each carry an N-linked (GlcNAc...) asparagine glycan. The tract at residues 127–217 is alpha-2; that stretch reads SHILQVVLGC…ELGRGVLGQQ (91 aa). Intrachain disulfides connect cysteine 136–cysteine 199 and cysteine 237–cysteine 294. The interval 218-309 is alpha-3; sequence VPTLVKVTRH…GLDQPLTASW (92 aa). The Ig-like C1-type domain maps to 219 to 308; sequence PTLVKVTRHW…PGLDQPLTAS (90 aa). The connecting peptide stretch occupies residues 310-318; that stretch reads EPLQSQAMI. Residues 319-339 form a helical membrane-spanning segment; the sequence is IGIISGVTVCAIFLVGILFLI. Over 340-359 the chain is Cytoplasmic; that stretch reads LRKRKASGGTMGGYVLTDCE.

The protein belongs to the MHC class I family. Binds TFR through the extracellular domain in a pH-dependent manner.

Its subcellular location is the cell membrane. In terms of biological role, binds to transferrin receptor (TFR) and reduces its affinity for iron-loaded transferrin. The chain is Hereditary hemochromatosis protein homolog (Hfe) from Mus musculus (Mouse).